A 238-amino-acid polypeptide reads, in one-letter code: Ribonuclease PH (238 aa).

Phosphate-binding positions include Arg-86 and 124 to 126; that span reads GTR.

Belongs to the RNase PH family. Homohexameric ring arranged as a trimer of dimers.

The enzyme catalyses tRNA(n+1) + phosphate = tRNA(n) + a ribonucleoside 5'-diphosphate. In terms of biological role, phosphorolytic 3'-5' exoribonuclease that plays an important role in tRNA 3'-end maturation. Removes nucleotide residues following the 3'-CCA terminus of tRNAs; can also add nucleotides to the ends of RNA molecules by using nucleoside diphosphates as substrates, but this may not be physiologically important. Probably plays a role in initiation of 16S rRNA degradation (leading to ribosome degradation) during starvation. This chain is Ribonuclease PH, found in Brucella anthropi (strain ATCC 49188 / DSM 6882 / CCUG 24695 / JCM 21032 / LMG 3331 / NBRC 15819 / NCTC 12168 / Alc 37) (Ochrobactrum anthropi).